Reading from the N-terminus, the 464-residue chain is Isthmin-1 (464 aa).

The N-terminal stretch at 1 to 29 is a signal peptide; the sequence is MVRLAAELLLLLGLLLLTLHITVLRGSGA. The N-linked (GlcNAc...) asparagine glycan is linked to Asn-39. Disordered regions lie at residues 50–98, 135–155, and 173–219; these read NVGS…LQRD, PDSEADKDQHPENKPSWSVPS, and SGDQ…STDG. Residues 51–63 are compositionally biased toward polar residues; that stretch reads VGSDTTSETSFSL. Composition is skewed to basic and acidic residues over residues 66-76 and 138-147; these read EAPREHLDHQA and EADKDQHPEN. One can recognise a TSP type-1 domain in the interval 218–262; that stretch reads DGEGDWSLWSVCSVTCGNGNQKRTRSCGYACTATESRTCDRPNCP. 3 disulfide bridges follow: Cys-229-Cys-256, Cys-233-Cys-261, and Cys-244-Cys-248. An AMOP domain is found at 289-452; that stretch reads LFEVDTDSCE…QKCTESPSDE (164 aa).

It belongs to the isthmin family. In terms of assembly, interacts with integrin ITGAV/ITGB5.

The protein resides in the secreted. In terms of biological role, acts as an angiogenesis inhibitor. In Homo sapiens (Human), this protein is Isthmin-1 (ISM1).